The sequence spans 291 residues: Ribosomal RNA small subunit methyltransferase H (291 aa).

Residues 31–33 (GGH), D50, F77, D98, and Q105 contribute to the S-adenosyl-L-methionine site.

It belongs to the methyltransferase superfamily. RsmH family.

It is found in the cytoplasm. The catalysed reaction is cytidine(1402) in 16S rRNA + S-adenosyl-L-methionine = N(4)-methylcytidine(1402) in 16S rRNA + S-adenosyl-L-homocysteine + H(+). Its function is as follows. Specifically methylates the N4 position of cytidine in position 1402 (C1402) of 16S rRNA. In Endomicrobium trichonymphae, this protein is Ribosomal RNA small subunit methyltransferase H.